Here is a 165-residue protein sequence, read N- to C-terminus: Large ribosomal subunit protein uL10 (165 aa).

Belongs to the universal ribosomal protein uL10 family. As to quaternary structure, part of the ribosomal stalk of the 50S ribosomal subunit. The N-terminus interacts with L11 and the large rRNA to form the base of the stalk. The C-terminus forms an elongated spine to which L12 dimers bind in a sequential fashion forming a multimeric L10(L12)X complex.

Forms part of the ribosomal stalk, playing a central role in the interaction of the ribosome with GTP-bound translation factors. This chain is Large ribosomal subunit protein uL10, found in Hamiltonella defensa subsp. Acyrthosiphon pisum (strain 5AT).